We begin with the raw amino-acid sequence, 319 residues long: Protoheme IX farnesyltransferase (319 aa).

The next 9 membrane-spanning stretches (helical) occupy residues 34–54, 55–75, 95–115, 119–139, 155–175, 182–202, 221–241, 244–264, and 291–311; these read VMSL…GHIN, PVLG…SGAL, IPAG…LSGF, ILGL…IFFY, IVIG…CVTG, VVLF…LALF, VPTT…IGVV, FMGF…VIFV, and IFYL…AVLM.

The protein belongs to the UbiA prenyltransferase family. Protoheme IX farnesyltransferase subfamily.

It localises to the cell inner membrane. The catalysed reaction is heme b + (2E,6E)-farnesyl diphosphate + H2O = Fe(II)-heme o + diphosphate. Its pathway is porphyrin-containing compound metabolism; heme O biosynthesis; heme O from protoheme: step 1/1. In terms of biological role, converts heme B (protoheme IX) to heme O by substitution of the vinyl group on carbon 2 of heme B porphyrin ring with a hydroxyethyl farnesyl side group. The protein is Protoheme IX farnesyltransferase of Rhizobium rhizogenes (strain K84 / ATCC BAA-868) (Agrobacterium radiobacter).